Consider the following 217-residue polypeptide: UPF0319 protein VS_II0881 (217 aa).

An N-terminal signal peptide occupies residues 1–21 (MKTIQSIALLSAIVAAPSVLA).

The protein belongs to the UPF0319 family.

This chain is UPF0319 protein VS_II0881, found in Vibrio atlanticus (strain LGP32) (Vibrio splendidus (strain Mel32)).